A 221-amino-acid polypeptide reads, in one-letter code: SLVGGVLISLVCLRQTDLKALIAYSSVAHMGIVLSGLLTMTYWGLTGSYALMIAHGLCSSGLFCLANISYERMGSRSLLINKGLLNFMPTLSLWWFLLCSGNMAAPPTLNLLGEISLLNSIVSWSWITMIMLSFLSFFSAAYSLYLFAYSQHGKIYSGVYFFSVGTTREFLLLMLHWLPLNLLILKSNFCMLWIYLNSLKKMLICGVNDMKLFILDRELFS.

5 helical membrane passes run 20–40 (ALIA…LLTM), 45–65 (LTGS…LFCL), 78–98 (LLIN…WFLL), 121–141 (IVSW…FSAA), and 170–190 (FLLL…SNFC).

It belongs to the complex I subunit 4 family.

The protein resides in the mitochondrion membrane. The catalysed reaction is a ubiquinone + NADH + 5 H(+)(in) = a ubiquinol + NAD(+) + 4 H(+)(out). In terms of biological role, core subunit of the mitochondrial membrane respiratory chain NADH dehydrogenase (Complex I) that is believed to belong to the minimal assembly required for catalysis. Complex I functions in the transfer of electrons from NADH to the respiratory chain. The immediate electron acceptor for the enzyme is believed to be ubiquinone. This is NADH-ubiquinone oxidoreductase chain 4 (ND4) from Anopheles arabiensis (Mosquito).